Reading from the N-terminus, the 338-residue chain is Cytosolic sulfotransferase 16 (338 aa).

Position 81-86 (81-86 (KTGTTW)) interacts with 3'-phosphoadenylyl sulfate. The active-site Proton acceptor is His143. 3'-phosphoadenylyl sulfate contacts are provided by residues Arg165, Ser173, Tyr231, and 301 to 303 (RKG).

Belongs to the sulfotransferase 1 family. In terms of tissue distribution, highly expressed in roots, stems and mature leaves. Low expression in young leaves and flowers. Barely detected in siliques.

It is found in the cytoplasm. It catalyses the reaction (Z)-desulfoglucotropeolin + 3'-phosphoadenylyl sulfate = (Z)-glucotropeolin + adenosine 3',5'-bisphosphate + H(+). The enzyme catalyses (Z)-indolylmethyl desulfoglucosinolate + 3'-phosphoadenylyl sulfate = (Z)-glucobrassicin + adenosine 3',5'-bisphosphate + H(+). Inhibited by phosphoadenosine 5'-phosphate (PAP). Sulfotransferase that utilizes 3'-phospho-5'-adenylyl sulfate (PAPS) as sulfonate donor to catalyze the sulfate conjugation of desulfo-glucosinolates (dsGSs), the final step in the biosynthesis of the glucosinolate core structure. Substrate preference is desulfo-2-phenylethyl glucosinolate &gt; desulfo-indol-3-yl methyl glucosinolate &gt; desulfo-benzyl glucosinolate &gt; desulfo-6-methylthiohexyl glucosinolate &gt; desulfo-4-methylthiobutyl glucosinolate &gt; desulfo-3-methylthiopropyl glucosinolate &gt; desulfo-singrin &gt; desulfo-3-butenyl glucosinolate. The sequence is that of Cytosolic sulfotransferase 16 (SOT16) from Arabidopsis thaliana (Mouse-ear cress).